We begin with the raw amino-acid sequence, 162 residues long: Small ribosomal subunit protein uS7m (162 aa).

The protein belongs to the universal ribosomal protein uS7 family. Part of the small ribosomal subunit.

It localises to the mitochondrion. In terms of biological role, one of the primary rRNA binding proteins, it binds directly to 16S-like rRNA where it nucleates assembly of the head domain of the small subunit. In Dictyostelium discoideum (Social amoeba), this protein is Small ribosomal subunit protein uS7m (mrps7).